We begin with the raw amino-acid sequence, 437 residues long: Methylenetetrahydrofolate--tRNA-(uracil-5-)-methyltransferase TrmFO (437 aa).

FAD is bound at residue 10 to 15; sequence GAGLAG.

It belongs to the MnmG family. TrmFO subfamily. FAD is required as a cofactor.

The protein localises to the cytoplasm. The catalysed reaction is uridine(54) in tRNA + (6R)-5,10-methylene-5,6,7,8-tetrahydrofolate + NADH + H(+) = 5-methyluridine(54) in tRNA + (6S)-5,6,7,8-tetrahydrofolate + NAD(+). The enzyme catalyses uridine(54) in tRNA + (6R)-5,10-methylene-5,6,7,8-tetrahydrofolate + NADPH + H(+) = 5-methyluridine(54) in tRNA + (6S)-5,6,7,8-tetrahydrofolate + NADP(+). Functionally, catalyzes the folate-dependent formation of 5-methyl-uridine at position 54 (M-5-U54) in all tRNAs. This Brevibacillus brevis (strain 47 / JCM 6285 / NBRC 100599) protein is Methylenetetrahydrofolate--tRNA-(uracil-5-)-methyltransferase TrmFO.